The primary structure comprises 205 residues: MAPPLLSLPLCILPPGSGSPRLVCYCERDSGGDGDRDDFNLYVTDAAELWSTCFSPDSLARLKARFGLSGAEDIHSRFRAACQQQAVTVSLQEDRALITLSGDTPALAFDLSKVPSPEAAPRLQALTLSLAEHVCNLERRLAAAEETITSPKKNTQPAGTQFLPELDHQRGSSGPGVRRRCPGESLINPGFKSKKPAAGVDFDET.

Residues 39 to 81 (FNLYVTDAAELWSTCFSPDSLARLKARFGLSGAEDIHSRFRAA) enclose the PISA domain. A Phosphothreonine modification is found at Thr-147. Residues 147–159 (TITSPKKNTQPAG) show a composition bias toward polar residues. Residues 147–205 (TITSPKKNTQPAGTQFLPELDHQRGSSGPGVRRRCPGESLINPGFKSKKPAAGVDFDET) are disordered. Ser-150 is modified (phosphoserine). The interval 172–205 (SSGPGVRRRCPGESLINPGFKSKKPAAGVDFDET) is mediates interaction with XRCC5/Ku80 and XRCC6/Ku70 and association with the non-homologous end joining core complex. The XLM motif lies at 191–205 (FKSKKPAAGVDFDET).

Belongs to the XRCC4-XLF family. PAXX subfamily. As to quaternary structure, homodimer. Interacts with the DNA-bound XRCC5/Ku80 and XRCC6/Ku70 heterodimer (Ku complex); the interaction is direct. Associated component of the non-homologous end joining (NHEJ) complex, composed of the core proteins PRKDC, LIG4, XRCC4, XRCC6/Ku70, XRCC5/Ku86 and NHEJ1/XLF. Interacts with POLL (DNA polymerase lambda); promoting POLL recruitment to double-strand breaks (DSBs) and stimulation of the end-filling activity of POLL. Post-translationally, phosphorylation may inhibit interaction with the DNA-bound XRCC5/Ku80 and XRCC6/Ku70 heterodimer (Ku complex).

Its subcellular location is the nucleus. The protein localises to the chromosome. Non-essential DNA repair protein involved in DNA non-homologous end joining (NHEJ); participates in double-strand break (DSB) repair and V(D)J recombination. May act as a scaffold required for accumulation of the Ku heterodimer, composed of XRCC5/Ku80 and XRCC6/Ku70, at double-strand break sites and promote the assembly and/or stability of the NHEJ machinery. Involved in NHEJ by promoting the ligation of blunt-ended DNA ends. Together with NHEJ1/XLF, collaborates with DNA polymerase lambda (POLL) to promote joining of non-cohesive DNA ends. Constitutes a non-essential component of classical NHEJ: has a complementary but distinct function with NHEJ1/XLF in DNA repair. This Mus musculus (Mouse) protein is Protein PAXX.